A 562-amino-acid polypeptide reads, in one-letter code: Glutamine--tRNA ligase (562 aa).

Residues 35 to 45 (PEPNGYLHIGH) carry the 'HIGH' region motif. Residues 36–38 (EPN) and 42–48 (HIGHAKS) contribute to the ATP site. Positions 68 and 213 each coordinate L-glutamine. Residues Thr-232 and 264–265 (RL) each bind ATP. A 'KMSKS' region motif is present at residues 271-275 (ITSKR).

The protein belongs to the class-I aminoacyl-tRNA synthetase family. In terms of assembly, monomer.

It localises to the cytoplasm. The enzyme catalyses tRNA(Gln) + L-glutamine + ATP = L-glutaminyl-tRNA(Gln) + AMP + diphosphate. The chain is Glutamine--tRNA ligase from Neisseria gonorrhoeae (strain ATCC 700825 / FA 1090).